Reading from the N-terminus, the 483-residue chain is Aspartyl/glutamyl-tRNA(Asn/Gln) amidotransferase subunit B (483 aa).

Belongs to the GatB/GatE family. GatB subfamily. Heterotrimer of A, B and C subunits.

The catalysed reaction is L-glutamyl-tRNA(Gln) + L-glutamine + ATP + H2O = L-glutaminyl-tRNA(Gln) + L-glutamate + ADP + phosphate + H(+). The enzyme catalyses L-aspartyl-tRNA(Asn) + L-glutamine + ATP + H2O = L-asparaginyl-tRNA(Asn) + L-glutamate + ADP + phosphate + 2 H(+). Allows the formation of correctly charged Asn-tRNA(Asn) or Gln-tRNA(Gln) through the transamidation of misacylated Asp-tRNA(Asn) or Glu-tRNA(Gln) in organisms which lack either or both of asparaginyl-tRNA or glutaminyl-tRNA synthetases. The reaction takes place in the presence of glutamine and ATP through an activated phospho-Asp-tRNA(Asn) or phospho-Glu-tRNA(Gln). This Lachnospira eligens (strain ATCC 27750 / DSM 3376 / VPI C15-48 / C15-B4) (Eubacterium eligens) protein is Aspartyl/glutamyl-tRNA(Asn/Gln) amidotransferase subunit B.